The chain runs to 678 residues: Protein mono-ADP-ribosyltransferase PARP15 (678 aa).

The span at 1-19 (MAAPGPLPAAALSPGAPTP) shows a compositional bias: low complexity. The tract at residues 1–67 (MAAPGPLPAA…SSRSMSRDNK (67 aa)) is disordered. Over residues 49 to 58 (GARKASRRSS) the composition is skewed to basic residues. Macro domains lie at 78–267 (NVVA…TNWS) and 293–464 (CFTA…KKRD). Residues 312–313 (DI), 324–325 (ST), Arg331, Val335, 409–413 (GTGNA), and Gln449 contribute to the substrate site. The PARP catalytic domain occupies 482-678 (LPEHWTDMNH…YPEYLITFTA (197 aa)).

This sequence belongs to the ARTD/PARP family.

It localises to the nucleus. The enzyme catalyses L-aspartyl-[protein] + NAD(+) = 4-O-(ADP-D-ribosyl)-L-aspartyl-[protein] + nicotinamide. It catalyses the reaction L-glutamyl-[protein] + NAD(+) = 5-O-(ADP-D-ribosyl)-L-glutamyl-[protein] + nicotinamide. Functionally, mono-ADP-ribosyltransferase that mediates mono-ADP-ribosylation of target proteins. Acts as a negative regulator of transcription. The sequence is that of Protein mono-ADP-ribosyltransferase PARP15 from Homo sapiens (Human).